Here is a 282-residue protein sequence, read N- to C-terminus: 2-dehydro-3-deoxyphosphooctonate aldolase (282 aa).

The protein belongs to the KdsA family.

It is found in the cytoplasm. It carries out the reaction D-arabinose 5-phosphate + phosphoenolpyruvate + H2O = 3-deoxy-alpha-D-manno-2-octulosonate-8-phosphate + phosphate. It functions in the pathway carbohydrate biosynthesis; 3-deoxy-D-manno-octulosonate biosynthesis; 3-deoxy-D-manno-octulosonate from D-ribulose 5-phosphate: step 2/3. Its pathway is bacterial outer membrane biogenesis; lipopolysaccharide biosynthesis. This chain is 2-dehydro-3-deoxyphosphooctonate aldolase, found in Shewanella pealeana (strain ATCC 700345 / ANG-SQ1).